Reading from the N-terminus, the 441-residue chain is ATP-dependent protease ATPase subunit HslU (441 aa).

ATP-binding positions include valine 18, 60–65 (GVGKTE), aspartate 254, glutamate 319, and arginine 391.

This sequence belongs to the ClpX chaperone family. HslU subfamily. A double ring-shaped homohexamer of HslV is capped on each side by a ring-shaped HslU homohexamer. The assembly of the HslU/HslV complex is dependent on binding of ATP.

The protein localises to the cytoplasm. ATPase subunit of a proteasome-like degradation complex; this subunit has chaperone activity. The binding of ATP and its subsequent hydrolysis by HslU are essential for unfolding of protein substrates subsequently hydrolyzed by HslV. HslU recognizes the N-terminal part of its protein substrates and unfolds these before they are guided to HslV for hydrolysis. In Verminephrobacter eiseniae (strain EF01-2), this protein is ATP-dependent protease ATPase subunit HslU.